Consider the following 309-residue polypeptide: tRNA pseudouridine synthase B (309 aa).

The Nucleophile role is filled by D39.

Belongs to the pseudouridine synthase TruB family. Type 1 subfamily.

It carries out the reaction uridine(55) in tRNA = pseudouridine(55) in tRNA. Functionally, responsible for synthesis of pseudouridine from uracil-55 in the psi GC loop of transfer RNAs. This is tRNA pseudouridine synthase B from Bacillus licheniformis (strain ATCC 14580 / DSM 13 / JCM 2505 / CCUG 7422 / NBRC 12200 / NCIMB 9375 / NCTC 10341 / NRRL NRS-1264 / Gibson 46).